A 656-amino-acid polypeptide reads, in one-letter code: MTFELRAAFSPCGDQPEAIAKLTQGVRNRTPSQVLLGTTGSGKTFTIANVVANVNRPTLVLAHNKTLAAQLYQEFKEFFPNNAVEYFISYYDYYQPEAYIARNDTYIEKSLLINSEIDKLRLSATRSILERRDTLIVSSVSCIYGIGSPENYTSMALELTVGTEYPRALLASQLVKMHYQASSVPQRSTFRERGSVIDIFPAYESELAIRLEFFNDTLTSIDYSDPLTMMPKESVTSVILYPGSHYVTPEAVREQAIRSIREELEERLAFFQDRPIEQDRLFHRTTHDIEMIKETGFCKGIENYSRHFTNTPPGAPPTCLLDYFPEDFLLVIDESHQTLPQIRAMYRGDFSRKQSLVEYGFRLPSAYDNRPLTYEEARKYFHNVIYVSATPGETELNESQGHIVEQILRPTGIPDPIPEIRPATGQVDDLLEEIRKRLSKSQEKILVISITKKLAEDIAAFLSELDIAAAYLHSGIETAERTRILSDLRLGNIDVLIGVNLLREGLDLPEVSLVAILDADKEGFLRSTSSLIQFCGRAARNVDGKVIFYADHKTLSIEQTLKETERRRHIQLEYNKANNITPKPIIKAIFANPIPQGGKKAVQDTPQKPLSTQELEKLIKKYENLMLQAANAFRFDEAAQYRDKMKAAKEQLLYLS.

A Helicase ATP-binding domain is found at 24 to 409; that stretch reads QGVRNRTPSQ…QGHIVEQILR (386 aa). An ATP-binding site is contributed by 37–44; the sequence is GTTGSGKT. A Beta-hairpin motif is present at residues 90–113; sequence YYDYYQPEAYIARNDTYIEKSLLI. The Helicase C-terminal domain maps to 426 to 589; that stretch reads QVDDLLEEIR…ITPKPIIKAI (164 aa). One can recognise a UVR domain in the interval 616–651; the sequence is EKLIKKYENLMLQAANAFRFDEAAQYRDKMKAAKEQ.

It belongs to the UvrB family. Forms a heterotetramer with UvrA during the search for lesions. Interacts with UvrC in an incision complex.

The protein localises to the cytoplasm. Its function is as follows. The UvrABC repair system catalyzes the recognition and processing of DNA lesions. A damage recognition complex composed of 2 UvrA and 2 UvrB subunits scans DNA for abnormalities. Upon binding of the UvrA(2)B(2) complex to a putative damaged site, the DNA wraps around one UvrB monomer. DNA wrap is dependent on ATP binding by UvrB and probably causes local melting of the DNA helix, facilitating insertion of UvrB beta-hairpin between the DNA strands. Then UvrB probes one DNA strand for the presence of a lesion. If a lesion is found the UvrA subunits dissociate and the UvrB-DNA preincision complex is formed. This complex is subsequently bound by UvrC and the second UvrB is released. If no lesion is found, the DNA wraps around the other UvrB subunit that will check the other stand for damage. The sequence is that of UvrABC system protein B from Chlamydia abortus (strain DSM 27085 / S26/3) (Chlamydophila abortus).